We begin with the raw amino-acid sequence, 218 residues long: Ropporin-1-like protein (218 aa).

The 38-residue stretch at 17–54 folds into the RIIa domain; that stretch reads PALPNMLKQFTKAAIRTQPRDVLQWAADYFSALSKGQD. Positions 199-218 are disordered; sequence QSQGGMVQPSNFTSLHTAEK.

This sequence belongs to the ropporin family. As to quaternary structure, component of axonemal radial spoke complexes.

It localises to the cell projection. It is found in the cilium. The protein localises to the flagellum. Its function is as follows. Functions as part of axonemal radial spoke complexes that play an important part in the motility of sperm and cilia. Important for male fertility. Involved in fibrous sheath integrity and sperm motility, plays a role in PKA-dependent signaling processes required for spermatozoa capacitation. The polypeptide is Ropporin-1-like protein (ropn1l) (Danio rerio (Zebrafish)).